A 237-amino-acid chain; its full sequence is Flagellar brake protein YcgR (237 aa).

One can recognise a PilZ domain in the interval 108-225 (QRRRQFRVTT…MERKIQSAVF (118 aa)).

This sequence belongs to the YcgR family. In terms of assembly, monomer. Interacts with the flagellar basal bodies.

The protein localises to the bacterial flagellum basal body. Functionally, acts as a flagellar brake, regulating swimming and swarming in a bis-(3'-5') cyclic diguanylic acid (c-di-GMP)-dependent manner. Binds 1 c-di-GMP dimer per subunit. Increasing levels of c-di-GMP lead to decreased motility. The sequence is that of Flagellar brake protein YcgR from Serratia proteamaculans (strain 568).